We begin with the raw amino-acid sequence, 315 residues long: DNA-directed RNA polymerase subunit alpha (315 aa).

Residues M1–S228 form an alpha N-terminal domain (alpha-NTD) region. Residues K245 to D315 form an alpha C-terminal domain (alpha-CTD) region.

This sequence belongs to the RNA polymerase alpha chain family. As to quaternary structure, homodimer. The RNAP catalytic core consists of 2 alpha, 1 beta, 1 beta' and 1 omega subunit. When a sigma factor is associated with the core the holoenzyme is formed, which can initiate transcription.

It catalyses the reaction RNA(n) + a ribonucleoside 5'-triphosphate = RNA(n+1) + diphosphate. Functionally, DNA-dependent RNA polymerase catalyzes the transcription of DNA into RNA using the four ribonucleoside triphosphates as substrates. The sequence is that of DNA-directed RNA polymerase subunit alpha from Acetivibrio thermocellus (strain ATCC 27405 / DSM 1237 / JCM 9322 / NBRC 103400 / NCIMB 10682 / NRRL B-4536 / VPI 7372) (Clostridium thermocellum).